The following is a 363-amino-acid chain: sn-glycerol-3-phosphate import ATP-binding protein UgpC (363 aa).

The 232-residue stretch at 4 to 235 folds into the ABC transporter domain; sequence VVLRNVRKTY…PATTFVASFI (232 aa). ATP is bound at residue 37–44; sequence GPSGCGKS.

This sequence belongs to the ABC transporter superfamily. sn-glycerol-3-phosphate importer (TC 3.A.1.1.3) family. In terms of assembly, the complex is composed of two ATP-binding proteins (UgpC), two transmembrane proteins (UgpA and UgpE) and a solute-binding protein (UgpB).

Its subcellular location is the cell inner membrane. The catalysed reaction is sn-glycerol 3-phosphate(out) + ATP + H2O = sn-glycerol 3-phosphate(in) + ADP + phosphate + H(+). Functionally, part of the ABC transporter complex UgpBAEC involved in sn-glycerol-3-phosphate (G3P) import. Responsible for energy coupling to the transport system. The sequence is that of sn-glycerol-3-phosphate import ATP-binding protein UgpC from Rhodopseudomonas palustris (strain ATCC BAA-98 / CGA009).